The following is a 260-amino-acid chain: Pyridoxine 5'-phosphate synthase (260 aa).

3-amino-2-oxopropyl phosphate is bound at residue Asn-15. 17-18 provides a ligand contact to 1-deoxy-D-xylulose 5-phosphate; the sequence is DH. Arg-26 provides a ligand contact to 3-amino-2-oxopropyl phosphate. The active-site Proton acceptor is the His-51. 1-deoxy-D-xylulose 5-phosphate contacts are provided by Arg-53 and His-58. The active-site Proton acceptor is the Glu-78. Thr-108 is a 1-deoxy-D-xylulose 5-phosphate binding site. Catalysis depends on His-199, which acts as the Proton donor. Residues Gly-200 and 221–222 each bind 3-amino-2-oxopropyl phosphate; that span reads GH.

This sequence belongs to the PNP synthase family. Homooctamer; tetramer of dimers.

The protein localises to the cytoplasm. The catalysed reaction is 3-amino-2-oxopropyl phosphate + 1-deoxy-D-xylulose 5-phosphate = pyridoxine 5'-phosphate + phosphate + 2 H2O + H(+). It functions in the pathway cofactor biosynthesis; pyridoxine 5'-phosphate biosynthesis; pyridoxine 5'-phosphate from D-erythrose 4-phosphate: step 5/5. Catalyzes the complicated ring closure reaction between the two acyclic compounds 1-deoxy-D-xylulose-5-phosphate (DXP) and 3-amino-2-oxopropyl phosphate (1-amino-acetone-3-phosphate or AAP) to form pyridoxine 5'-phosphate (PNP) and inorganic phosphate. This is Pyridoxine 5'-phosphate synthase from Cupriavidus metallidurans (strain ATCC 43123 / DSM 2839 / NBRC 102507 / CH34) (Ralstonia metallidurans).